We begin with the raw amino-acid sequence, 375 residues long: tRNA-specific 2-thiouridylase MnmA (375 aa).

Residues 18–25 (GMSGGVDS) and methionine 44 contribute to the ATP site. The interaction with target base in tRNA stretch occupies residues 104 to 106 (NPD). The Nucleophile role is filled by cysteine 109. Cysteines 109 and 206 form a disulfide. Glycine 134 lines the ATP pocket. Residues 156–158 (KDQ) are interaction with tRNA. Cysteine 206 functions as the Cysteine persulfide intermediate in the catalytic mechanism. Positions 318–319 (RY) are interaction with tRNA.

This sequence belongs to the MnmA/TRMU family.

The protein resides in the cytoplasm. The enzyme catalyses S-sulfanyl-L-cysteinyl-[protein] + uridine(34) in tRNA + AH2 + ATP = 2-thiouridine(34) in tRNA + L-cysteinyl-[protein] + A + AMP + diphosphate + H(+). Its function is as follows. Catalyzes the 2-thiolation of uridine at the wobble position (U34) of tRNA, leading to the formation of s(2)U34. The sequence is that of tRNA-specific 2-thiouridylase MnmA from Colwellia psychrerythraea (strain 34H / ATCC BAA-681) (Vibrio psychroerythus).